Reading from the N-terminus, the 323-residue chain is Aldo-keto reductase family 1 member C1 (323 aa).

Residues Gly-20–Tyr-24 and Asp-50 contribute to the NADP(+) site. Tyr-24 lines the substrate pocket. Catalysis depends on Tyr-55, which acts as the Proton donor. A substrate-binding site is contributed by His-117. Residues Ser-166–Asn-167, Gln-190, and Tyr-216–His-222 contribute to the NADP(+) site. Residues His-222 and Trp-227 each coordinate substrate. Lys-270–Asn-280 lines the NADP(+) pocket.

Belongs to the aldo/keto reductase family. As to quaternary structure, monomer. In terms of tissue distribution, expressed in all tissues tested including liver, prostate, testis, adrenal gland, brain, uterus, mammary gland and keratinocytes. Highest levels found in liver, mammary gland and brain.

Its subcellular location is the cytoplasm. The protein localises to the cytosol. The enzyme catalyses a 3alpha-hydroxysteroid + NADP(+) = a 3-oxosteroid + NADPH + H(+). It carries out the reaction a 3alpha-hydroxysteroid + NAD(+) = a 3-oxosteroid + NADH + H(+). It catalyses the reaction (17R,20S)-17,20-dihydroxypregn-4-en-3-one + NADP(+) = 17alpha-hydroxyprogesterone + NADPH + H(+). The catalysed reaction is (17R,20S)-17,20-dihydroxypregn-4-en-3-one + NAD(+) = 17alpha-hydroxyprogesterone + NADH + H(+). The enzyme catalyses (20S)-hydroxypregn-4-en-3-one + NADP(+) = progesterone + NADPH + H(+). It carries out the reaction (20S)-hydroxypregn-4-en-3-one + NAD(+) = progesterone + NADH + H(+). It catalyses the reaction (1R,2R)-1,2-dihydrobenzene-1,2-diol + NADP(+) = catechol + NADPH + H(+). The catalysed reaction is (S)-indan-1-ol + NAD(+) = indan-1-one + NADH + H(+). The enzyme catalyses (S)-indan-1-ol + NADP(+) = indan-1-one + NADPH + H(+). It carries out the reaction 5alpha-androstane-3alpha,17beta-diol + NADP(+) = 17beta-hydroxy-5alpha-androstan-3-one + NADPH + H(+). It catalyses the reaction 5alpha-androstane-3beta,17beta-diol + NADP(+) = 17beta-hydroxy-5alpha-androstan-3-one + NADPH + H(+). The catalysed reaction is 5alpha-androstane-3alpha,17beta-diol + NAD(+) = 17beta-hydroxy-5alpha-androstan-3-one + NADH + H(+). The enzyme catalyses 17beta-hydroxy-5alpha-androstan-3-one + NADP(+) = 5alpha-androstan-3,17-dione + NADPH + H(+). It carries out the reaction androsterone + NADP(+) = 5alpha-androstan-3,17-dione + NADPH + H(+). It catalyses the reaction androsterone + NADPH + H(+) = 5alpha-androstane-3alpha,17beta-diol + NADP(+). The catalysed reaction is 5alpha-androstane-3alpha,17beta-diol + NAD(+) = androsterone + NADH + H(+). The enzyme catalyses 17beta-estradiol + NADP(+) = estrone + NADPH + H(+). It carries out the reaction 17beta-estradiol + NAD(+) = estrone + NADH + H(+). It catalyses the reaction testosterone + NADP(+) = androst-4-ene-3,17-dione + NADPH + H(+). The catalysed reaction is 20alpha-hydroxy-5beta-pregnan-3-one + NADP(+) = 5beta-pregnan-3,20-dione + NADPH + H(+). The enzyme catalyses 3beta-hydroxy-5beta-pregnane-20-one + NADP(+) = 5beta-pregnan-3,20-dione + NADPH + H(+). It carries out the reaction 3beta-hydroxy-5beta-pregnane-20-one + NADPH + H(+) = 3beta,20alpha-dihydroxy-5beta-pregnane + NADP(+). It catalyses the reaction (3beta,5alpha,17beta)-3-hydroxyandrostan-17-yl sulfate + NADP(+) = 5alpha-dihydrotestosterone sulfate + NADPH + H(+). It functions in the pathway steroid metabolism. Inhibited by hexestrol with an IC(50) of 9.5 uM, 1,10-phenanthroline with an IC(50) of 55 uM, 1,7-phenanthroline with an IC(50) of 72 uM, flufenamic acid with an IC(50) of 6.0 uM, indomethacin with an IC(50) of 140 uM, ibuprofen with an IC(50) of 950 uM, lithocholic acid with an IC(50) of 25 uM, ursodeoxycholic acid with an IC(50) of 340 uM and chenodeoxycholic acid with an IC(50) of 570 uM. The oxidation reaction is inhibited by low micromolar concentrations of NADPH. Cytosolic aldo-keto reductase that catalyzes the NADH and NADPH-dependent reduction of ketosteroids to hydroxysteroids. Most probably acts as a reductase in vivo since the oxidase activity measured in vitro is inhibited by physiological concentrations of NADPH. Displays a broad positional specificity acting on positions 3, 17 and 20 of steroids and regulates the metabolism of hormones like estrogens and androgens. May also reduce conjugated steroids such as 5alpha-dihydrotestosterone sulfate. Displays affinity for bile acids. This Homo sapiens (Human) protein is Aldo-keto reductase family 1 member C1 (AKR1C1).